The sequence spans 478 residues: uncharacterized protein (478 aa).

Residues 174-366 (RQVLAAAGVP…LIGEHIKLAI (193 aa)) form the ATP-grasp domain. 214–219 (GSGSRG) contributes to the ATP binding site. Residue arginine 339 is part of the active site.

This is an uncharacterized protein from Sinorhizobium fredii (strain NBRC 101917 / NGR234).